We begin with the raw amino-acid sequence, 428 residues long: Adenylosuccinate synthetase (428 aa).

Residues 12-18 (GDEGKGK) and 40-42 (GHT) each bind GTP. Residue aspartate 13 is the Proton acceptor of the active site. Residues aspartate 13 and glycine 40 each coordinate Mg(2+). Residues 13–16 (DEGK), 38–41 (NAGH), threonine 129, arginine 143, glutamine 224, threonine 239, and arginine 303 each bind IMP. Residue histidine 41 is the Proton donor of the active site. 299-305 (VTTGRIR) contacts substrate. GTP is bound by residues arginine 305, 331 to 333 (KVD), and 410 to 412 (AYG).

This sequence belongs to the adenylosuccinate synthetase family. Homodimer. It depends on Mg(2+) as a cofactor.

The protein resides in the cytoplasm. The enzyme catalyses IMP + L-aspartate + GTP = N(6)-(1,2-dicarboxyethyl)-AMP + GDP + phosphate + 2 H(+). The protein operates within purine metabolism; AMP biosynthesis via de novo pathway; AMP from IMP: step 1/2. In terms of biological role, plays an important role in the de novo pathway of purine nucleotide biosynthesis. Catalyzes the first committed step in the biosynthesis of AMP from IMP. This Francisella tularensis subsp. mediasiatica (strain FSC147) protein is Adenylosuccinate synthetase.